Here is a 215-residue protein sequence, read N- to C-terminus: Dual specificity phosphatase 29 (215 aa).

Residues 53-201 (HVNEVWPRLH…LRELDKQLVK (149 aa)) enclose the Tyrosine-protein phosphatase domain. 145-152 (HCAMGRSR) lines the substrate pocket. Cysteine 146 acts as the Phosphocysteine intermediate in catalysis.

The protein belongs to the protein-tyrosine phosphatase family. Non-receptor class dual specificity subfamily. As to quaternary structure, homodimer. Interacts with PRKAA2. As to expression, skeletal muscle, liver and adipose tissue.

The protein localises to the cytoplasm. It localises to the nucleus. The enzyme catalyses O-phospho-L-tyrosyl-[protein] + H2O = L-tyrosyl-[protein] + phosphate. It catalyses the reaction O-phospho-L-seryl-[protein] + H2O = L-seryl-[protein] + phosphate. It carries out the reaction O-phospho-L-threonyl-[protein] + H2O = L-threonyl-[protein] + phosphate. Dual specificity phosphatase able to dephosphorylate phosphotyrosine, phosphoserine and phosphothreonine residues within the same substrate, with a preference for phosphotyrosine as a substrate. Involved in the modulation of intracellular signaling cascades. In skeletal muscle regulates systemic glucose homeostasis by activating, AMPK, an energy sensor protein kinase. Affects MAP kinase signaling though modulation of the MAPK1/2 cascade in skeletal muscle promoting muscle cell differentiation, development and atrophy. The protein is Dual specificity phosphatase 29 of Mus musculus (Mouse).